The primary structure comprises 350 residues: Guanine nucleotide-binding protein G(t) subunit alpha (350 aa).

Residues 1–21 (MGAGASAEEKHSRELEKKLKE) form a disordered region. The N-myristoyl glycine moiety is linked to residue glycine 2. A compositionally biased stretch (basic and acidic residues) spans 7-21 (AEEKHSRELEKKLKE). One can recognise a G-alpha domain in the interval 28-350 (RTVKLLLLGA…KENLKDCGLF (323 aa)). Positions 31–44 (KLLLLGAGESGKST) are G1 motif. Residues 36–43 (GAGESGKS), 171–177 (LRSRVKT), 196–200 (DVGGQ), 265–268 (NKKD), and alanine 322 contribute to the GTP site. Positions 43 and 177 each coordinate Mg(2+). Residues 169–177 (DVLRSRVKT) are G2 motif. A G3 motif region spans residues 192–201 (FRMFDVGGQR). Positions 261–268 (VLFLNKKD) are G4 motif. The G5 motif stretch occupies residues 320–325 (TCATDT).

The protein belongs to the G-alpha family. G(i/o/t/z) subfamily. G proteins are composed of 3 units; alpha, beta and gamma. The alpha chain contains the guanine nucleotide binding site.

In terms of biological role, guanine nucleotide-binding proteins (G proteins) are involved as modulators or transducers in various transmembrane signaling systems. Transducin is an amplifier and one of the transducers of a visual impulse that performs the coupling between rhodopsin and cGMP-phosphodiesterase. The chain is Guanine nucleotide-binding protein G(t) subunit alpha (gnat) from Xenopus laevis (African clawed frog).